A 213-amino-acid polypeptide reads, in one-letter code: Adenylate kinase (213 aa).

An ATP-binding site is contributed by 10–15; sequence GAGKGT. The segment at 30–59 is NMP; sequence STGDMFRAAMANQTEMGILAKSYIDKGDLV. AMP contacts are provided by residues threonine 31, arginine 36, 57-59, 86-89, and glutamine 93; these read DLV and GYPR. The LID stretch occupies residues 127–160; sequence GRIIHKETGETFHKVFNPPVGDYKEEDFYQREDD. Residues arginine 128 and 137–138 each bind ATP; that span reads TF. Residues arginine 157 and arginine 168 each contribute to the AMP site. Position 196 (glutamine 196) interacts with ATP.

The protein belongs to the adenylate kinase family. As to quaternary structure, monomer.

It is found in the cytoplasm. The enzyme catalyses AMP + ATP = 2 ADP. The protein operates within purine metabolism; AMP biosynthesis via salvage pathway; AMP from ADP: step 1/1. Catalyzes the reversible transfer of the terminal phosphate group between ATP and AMP. Plays an important role in cellular energy homeostasis and in adenine nucleotide metabolism. This Streptococcus suis (strain 98HAH33) protein is Adenylate kinase.